A 256-amino-acid chain; its full sequence is 3-isopropylmalate dehydratase small subunit 2 (256 aa).

Residues 1-59 (MAYSLPTFPQALPCSSTKTSSSLATFRSPFLRFNGSTSLIPSSISITSRGTSSPTIIPR) constitute a chloroplast transit peptide.

Belongs to the LeuD family. As to quaternary structure, heterodimer of the large LEUC/IIL1 subunit and the small LEUD (SSU1, SSU2 or SSU3) subunits. In terms of tissue distribution, expressed in vascular bundles of roots, cotyledons and rosette leaves. Expressed in stem vascular bundles which branche off into lateral inflorescences. Expressed in connective tissues in anthers. In young seedlings, expressed in cotyledon epidermal cells and vasculare bundles. In hypocotyls, expressed in parenchyma cells surrounding the vasculature and further peripheral cells. In seedling roots, expressed in cells along the vasculature. In roots of adult plants, expressed in cells closely associated with the stele. In flowering stalks, expressed in parenchyma cells associated with the phloem or the xylem. Expressed in the vasculature of sepals and petals.

It localises to the plastid. The protein resides in the chloroplast stroma. The catalysed reaction is (2R,3S)-3-isopropylmalate = (2S)-2-isopropylmalate. It carries out the reaction a 2-(omega-methylsulfanyl)alkylmalate = a 2-(omega-methylsulfanyl)alkylmaleate + H2O. The enzyme catalyses 2-(3-methylsulfanyl)propylmalate = 2-(2-methylsulfanyl)propylmaleate + H2O. It catalyses the reaction a 3-(omega-methylsulfanyl)alkylmalate = a 2-(omega-methylsulfanyl)alkylmaleate + H2O. The catalysed reaction is 2-(2-methylsulfanyl)ethylmalate = 2-(2-methylsulfanyl)ethylmaleate + H2O. It carries out the reaction 3-(2-methylsulfanyl)ethylmalate = 2-(2-methylsulfanyl)ethylmaleate + H2O. The enzyme catalyses 3-(3-methylsulfanyl)propylmalate = 2-(2-methylsulfanyl)propylmaleate + H2O. It functions in the pathway amino-acid biosynthesis; L-leucine biosynthesis; L-leucine from 3-methyl-2-oxobutanoate: step 2/4. In terms of biological role, catalyzes the isomerization between 2-isopropylmalate and 3-isopropylmalate, via the formation of 2-isopropylmaleate. Functions redundantly with LEUD2 in the methionine chain elongation pathway of aliphatic glucosinolate formation. This chain is 3-isopropylmalate dehydratase small subunit 2, found in Arabidopsis thaliana (Mouse-ear cress).